A 286-amino-acid chain; its full sequence is Beta-glucanase (286 aa).

A signal peptide spans methionine 1–glycine 30. Positions phenylalanine 48 to glutamate 286 constitute a GH16 domain. The active-site Nucleophile is the glutamate 158. The active-site Proton donor is the glutamate 163.

This sequence belongs to the glycosyl hydrolase 16 family.

The catalysed reaction is Hydrolysis of (1-&gt;4)-beta-D-glucosidic linkages in beta-D-glucans containing (1-&gt;3)- and (1-&gt;4)-bonds.. In terms of biological role, shows activity on lichenan, beta-glucan and laminarin but not on CMC cellulose or xylan. This chain is Beta-glucanase (bglA), found in Rhodothermus marinus (Rhodothermus obamensis).